A 252-amino-acid chain; its full sequence is MIKKRIIPCLDVKDGRVVKGIQFKGLRDIGNPVDLAIYYNEAGADELVFLDISKTEEGHSLMLEVIEQTASRLFIPLTVGGGIQSLDDITQLLNHGADKVSLNSSALKNPQLIKQASDKFGRQCICIAIDSYYDPERKAHYCCTHGGKKMTNIKVYDWVQQVEQLGAGELLVTSMGHDGMKQGFDIEHLAKIKSLVNIPIIASGGGGNAQHFVELFNQTDVSAGLAASILHDRETTVQSIKEVIRQGGIAVR.

Catalysis depends on residues Asp-11 and Asp-130.

It belongs to the HisA/HisF family. Heterodimer of HisH and HisF.

The protein localises to the cytoplasm. The catalysed reaction is 5-[(5-phospho-1-deoxy-D-ribulos-1-ylimino)methylamino]-1-(5-phospho-beta-D-ribosyl)imidazole-4-carboxamide + L-glutamine = D-erythro-1-(imidazol-4-yl)glycerol 3-phosphate + 5-amino-1-(5-phospho-beta-D-ribosyl)imidazole-4-carboxamide + L-glutamate + H(+). It functions in the pathway amino-acid biosynthesis; L-histidine biosynthesis; L-histidine from 5-phospho-alpha-D-ribose 1-diphosphate: step 5/9. Functionally, IGPS catalyzes the conversion of PRFAR and glutamine to IGP, AICAR and glutamate. The HisF subunit catalyzes the cyclization activity that produces IGP and AICAR from PRFAR using the ammonia provided by the HisH subunit. The sequence is that of Imidazole glycerol phosphate synthase subunit HisF from Staphylococcus aureus (strain Mu3 / ATCC 700698).